Here is a 322-residue protein sequence, read N- to C-terminus: MLQGHERSITQIKYNREGDLLFSSSKDQKPNVWYSLNGERLGTYDGHQGAVWCLDVDWESRKLITAGGDMTAKLWDVEYGTVIASIPTKSSVRTCNFSFSGNQAAYSTDKTMGQSCELFIIDVRNADSTLSEQTPTLRIPMTESKITSMLWGPLDETIITGHDNGNIAIWDVRKGQKVVDSGTDHTGVINDMQLSKDGTMFVTASKDATAKLFDSETLMCLKTYKTERPVNSAAISPILDHVVLGGGQDAMEVTTTSTKAGKFDSRFFHLIYEEEFARLKGHFGPINSLAFHPDGKSYASGGEDGFVRVQSFDSTYFENIFE.

WD repeat units follow at residues 4-43, 46-85, 141-180, 184-223, and 281-322; these read GHER…RLGT, GHQG…VIAS, MTES…KVVD, DHTG…CLKT, and GHFG…NIFE.

This sequence belongs to the eIF-3 subunit I family. As to quaternary structure, component of the eukaryotic translation initiation factor 3 (eIF-3) complex. The eIF-3 complex interacts with pix.

It is found in the cytoplasm. In terms of biological role, component of the eukaryotic translation initiation factor 3 (eIF-3) complex, which is involved in protein synthesis of a specialized repertoire of mRNAs and, together with other initiation factors, stimulates binding of mRNA and methionyl-tRNAi to the 40S ribosome. The eIF-3 complex specifically targets and initiates translation of a subset of mRNAs involved in cell proliferation. The chain is Eukaryotic translation initiation factor 3 subunit I from Drosophila willistoni (Fruit fly).